Here is a 637-residue protein sequence, read N- to C-terminus: Interleukin-17 receptor E (637 aa).

A signal peptide spans 1 to 24; sequence MGSPRLAALLLSQPLLFICLAVSA. The Extracellular segment spans residues 25–415; that stretch reads QVACPCLPRW…LCPDVSHRHL (391 aa). N-linked (GlcNAc...) asparagine glycosylation is found at Asn-278 and Asn-307. A helical membrane pass occupies residues 416–436; it reads GLLILALLGLTTLLGVVLVLF. At 437-637 the chain is on the cytoplasmic side; it reads CRRLLPGPGR…TNSPCGFSCL (201 aa). Positions 447 to 583 constitute an SEFIR domain; the sequence is TRPVLLLHAA…LLRDLPRLLR (137 aa).

As to quaternary structure, forms heterodimers with IL17RE; the heterodimer binds IL17C.

It localises to the cell membrane. Its function is as follows. Specific functional receptor for IL17C, signaling through the NF-kappa-B and MAPK pathways. Requires TRAF3IP2 /ACT1 for signaling. Crucial regulator in innate immunity to bacterial pathogens. This chain is Interleukin-17 receptor E (Il17re), found in Rattus norvegicus (Rat).